The chain runs to 862 residues: Taxadiene synthase (862 aa).

The disordered stretch occupies residues 45–66 (RVKMSRGSGGPGPVVMMSSSTG). Residues Asp-613, Asp-617, Asn-757, Thr-761, and Glu-765 each coordinate Mg(2+). A DDXXD motif motif is present at residues 613 to 617 (DDMAD).

The protein belongs to the terpene synthase family. Mg(2+) serves as cofactor.

The catalysed reaction is (2E,6E,10E)-geranylgeranyl diphosphate = taxa-4(5),11(12)-diene + diphosphate. It participates in alkaloid biosynthesis; taxol biosynthesis; taxa-4(20),11-dien-5alpha-ol from geranylgeranyl diphosphate: step 1/2. Catalyzes the cyclization of the ubiquitous isoprenoid intermediate geranylgeranyl diphosphate to taxa-4,11-diene, the parent olefin with a taxane skeleton. This is Taxadiene synthase (TDC1) from Taxus chinensis (Chinese yew).